Reading from the N-terminus, the 370-residue chain is 4-hydroxy-3-methylbut-2-en-1-yl diphosphate synthase (flavodoxin) (370 aa).

Residues Cys-268, Cys-271, Cys-303, and Glu-310 each contribute to the [4Fe-4S] cluster site.

The protein belongs to the IspG family. The cofactor is [4Fe-4S] cluster.

It carries out the reaction (2E)-4-hydroxy-3-methylbut-2-enyl diphosphate + oxidized [flavodoxin] + H2O + 2 H(+) = 2-C-methyl-D-erythritol 2,4-cyclic diphosphate + reduced [flavodoxin]. Its pathway is isoprenoid biosynthesis; isopentenyl diphosphate biosynthesis via DXP pathway; isopentenyl diphosphate from 1-deoxy-D-xylulose 5-phosphate: step 5/6. In terms of biological role, converts 2C-methyl-D-erythritol 2,4-cyclodiphosphate (ME-2,4cPP) into 1-hydroxy-2-methyl-2-(E)-butenyl 4-diphosphate. The polypeptide is 4-hydroxy-3-methylbut-2-en-1-yl diphosphate synthase (flavodoxin) (Bacillus cereus (strain AH187)).